The following is a 547-amino-acid chain: Putative nitric oxide synthase (547 aa).

A compositionally biased stretch (low complexity) spans 24–40 (QLAPNPSSFSPTRAAST). Disordered stretches follow at residues 24–57 (QLAP…SRGD) and 72–91 (VLAP…RKAL). A compositionally biased stretch (basic residues) spans 81-91 (RRRRREKRKAL). One can recognise a CP-type G domain in the interval 167–343 (ADQLRDKLSY…LYDTPGVHLH (177 aa)).

Belongs to the TRAFAC class YlqF/YawG GTPase family. NOA1 subfamily.

It catalyses the reaction 2 L-arginine + 3 NADPH + 4 O2 + H(+) = 2 L-citrulline + 2 nitric oxide + 3 NADP(+) + 4 H2O. In terms of biological role, produces nitric oxide (NO) which is a messenger molecule involved in hormonal signaling and defense responses in plant. The chain is Putative nitric oxide synthase from Oryza sativa subsp. japonica (Rice).